A 188-amino-acid chain; its full sequence is Elongation factor P-like protein (188 aa).

This sequence belongs to the elongation factor P family.

The sequence is that of Elongation factor P-like protein from Xanthomonas campestris pv. campestris (strain 8004).